The primary structure comprises 229 residues: MAKKKAFTPLLYLASIVFLPWWISLSFNKSLKSWITNWWDTRQSETFLNDIQEKSILEQFIEVEELFLLDEMIKEYPETHLQKLRIGIQKETIQLIKLHNEDHIHTILHFSTNLICFVILSGYSILGNEELLILNSWVQEFLYNLSDTIKAFSILLLTDLCIGFHSPHGWELMIGSIYKDFGFAHNDQIISGLVSTFPVILDTIFKYWIFRYLNRVSPSLVVIYHSMND.

The next 4 helical transmembrane spans lie at 7–27 (FTPLLYLASIVFLPWWISLSF), 114–134 (LICFVILSGYSILGNEELLIL), 154–174 (ILLLTDLCIGFHSPHGWELMI), and 189–209 (IISGLVSTFPVILDTIFKYWI).

This sequence belongs to the CemA family.

It localises to the plastid. Its subcellular location is the chloroplast inner membrane. It catalyses the reaction K(+)(in) + H(+)(out) = K(+)(out) + H(+)(in). Functionally, contributes to K(+)/H(+) antiport activity by supporting proton efflux to control proton extrusion and homeostasis in chloroplasts in a light-dependent manner to modulate photosynthesis. Prevents excessive induction of non-photochemical quenching (NPQ) under continuous-light conditions. Indirectly promotes efficient inorganic carbon uptake into chloroplasts. The chain is Potassium/proton antiporter CemA from Gossypium hirsutum (Upland cotton).